The chain runs to 783 residues: Protein SCARECROW (783 aa).

Residues 298–387 (QPQSQDAITH…QSPPASENTA (90 aa)) are disordered. 2 stretches are compositionally biased toward low complexity: residues 342 to 353 (PSSLPFVPVPSS) and 372 to 384 (ESQS…PASE). A coiled-coil region spans residues 387-418 (AAAALIRTESIMRREKEELEQQKKDEEGLHLL). One can recognise a GRAS domain in the interval 408 to 777 (QKKDEEGLHL…LCLLTASAWR (370 aa)). The segment at 415–478 (LHLLTLLLQC…LVNSCLGIYA (64 aa)) is leucine repeat I (LRI). The short motif at 422 to 426 (LQCAE) is the LxCxE motif element. The interval 497–562 (FQVFNGISPF…GGPPLVRLTG (66 aa)) is VHIID. The VHIID motif lies at 528–532 (VHIID). Positions 572 to 604 (ATGKRLSDFAQKLGLPFEFFPVADKVGNLDPQR) are leucine repeat II (LRII). A PFYRE region spans residues 613 to 700 (VAVHWLQHSL…QQLLSREIRN (88 aa)). Residues 703–777 (AVGGPSRSGE…LCLLTASAWR (75 aa)) form an SAW region.

It belongs to the GRAS family.

Its subcellular location is the nucleus. Putative transcription factor involved in asymmetric cell division. Required for differentiation of endodermis and graviresponses. The polypeptide is Protein SCARECROW (SCR) (Ipomoea nil (Japanese morning glory)).